The following is a 215-amino-acid chain: Adenylate kinase (215 aa).

10–15 (GAGKGT) contributes to the ATP binding site. An NMP region spans residues 30–59 (STGDILRANVREGTELGLAAKAYMDKGELV). Residues threonine 31, arginine 36, 57–59 (ELV), 85–88 (GYPR), and glutamine 92 contribute to the AMP site. The LID stretch occupies residues 126–162 (GRLMCKCGASYHTIANPPKKDNICDICGGEVYQRDDD). Arginine 127 is an ATP binding site. 2 residues coordinate Zn(2+): cysteine 130 and cysteine 132. 135 to 136 (SY) lines the ATP pocket. 2 residues coordinate Zn(2+): cysteine 149 and cysteine 152. Arginine 159 and arginine 170 together coordinate AMP. Lysine 198 serves as a coordination point for ATP.

Belongs to the adenylate kinase family. In terms of assembly, monomer.

It localises to the cytoplasm. The enzyme catalyses AMP + ATP = 2 ADP. The protein operates within purine metabolism; AMP biosynthesis via salvage pathway; AMP from ADP: step 1/1. Functionally, catalyzes the reversible transfer of the terminal phosphate group between ATP and AMP. Plays an important role in cellular energy homeostasis and in adenine nucleotide metabolism. The protein is Adenylate kinase of Methanosarcina mazei (strain ATCC BAA-159 / DSM 3647 / Goe1 / Go1 / JCM 11833 / OCM 88) (Methanosarcina frisia).